A 174-amino-acid polypeptide reads, in one-letter code: RNA pyrophosphohydrolase (174 aa).

Residues 6–149 enclose the Nudix hydrolase domain; it reads GFRANVGIVI…KREVYRRAMK (144 aa). A Nudix box motif is present at residues 38 to 59; the sequence is GGIDEGETAEQTMYRELYEEVG.

The protein belongs to the Nudix hydrolase family. RppH subfamily. The cofactor is a divalent metal cation.

Functionally, accelerates the degradation of transcripts by removing pyrophosphate from the 5'-end of triphosphorylated RNA, leading to a more labile monophosphorylated state that can stimulate subsequent ribonuclease cleavage. This chain is RNA pyrophosphohydrolase, found in Pseudoalteromonas atlantica (strain T6c / ATCC BAA-1087).